Reading from the N-terminus, the 653-residue chain is Ran-binding protein 9 (653 aa).

The span at 1–21 (MSGQPPPPPPQQQPPPPPPPA) shows a compositional bias: pro residues. The segment at 1-62 (MSGQPPPPPP…SAAAPFPHGD (62 aa)) is disordered. The segment covering 22–57 (SAAAPATAPPGLAVGPGPAAGVPVPGLAAGSSAAAP) has biased composition (low complexity). A B30.2/SPRY domain is found at 72 to 259 (LQRRLKRLYP…VDANFGQHPF (188 aa)). A LisH domain is found at 290-322 (WQTMIQKMVSSYLVHHGYCATAEAFARSTDQTV). The tract at residues 326–332 (LASIKNR) is interaction with CALB1. Residues 328 to 385 (SIKNRQRIQKLVLAGRMGEAIETTQQLYPSLLERNPNLLFTLKVRQFIEMVNGTDSEV) form the CTLH domain. Residue Lys-330 is modified to N6-acetyllysine. The interval 386–422 (RCLGGRSPKSQDSYPVSPRPFSSPSMSPSHGMSIHSL) is disordered. The span at 398–421 (SYPVSPRPFSSPSMSPSHGMSIHS) shows a compositional bias: low complexity. 2 positions are modified to phosphoserine: Ser-402 and Ser-412. The tract at residues 539–653 (AAIERMIHFG…AFATVEDYLH (115 aa)) is interaction with FMR1.

It belongs to the RANBP9/10 family. In terms of assembly, part of a complex consisting of RANBP9, MKLN1 and GID8. Identified in the CTLH complex that contains GID4, RANBP9 and/or RANBP10, MKLN1, MAEA, RMND5A (or alternatively its paralog RMND5B), GID8, ARMC8, WDR26 and YPEL5. Within this complex, MAEA, RMND5A (or alternatively its paralog RMND5B), GID8, WDR26, and RANBP9 and/or RANBP10 form the catalytic core, while GID4, MKLN1, ARMC8 and YPEL5 have ancillary roles. Interacts with GTP-bound Ran, AR, CDC2L1/p110C, CALB1, S100A7, USP11, SOS1 or SOS2, GID8, and FMR1. Interacts with the Dyrk kinases HIPK2, DYRK1A, and DYRK1B. Interacts with TP73 isoform Alpha but not with TP53. Interacts with the HGF receptor MET and the integrins ITGB1 and ITGB2, but not with ITGAL. Part of a complex consisting of RANBP9, RAN, DYRK1B and COPS5. Directly interacts with RANBP10. Interacts with YPEL5. Interacts with MKLN1. Interacts with DDX4. Interacts with NGFR. Interacts with Tex19.1 and, probably, Tex19.2. Phosphorylated in response to stress. In terms of processing, ubiquitinated. Polyubiquitination targets the protein for rapid degradation via the ubiquitin system. As to expression, ubiquitously expressed, with highest levels in maturating spermatocytes.

The protein resides in the cytoplasm. It is found in the cell membrane. The protein localises to the nucleus. Its function is as follows. May act as scaffolding protein, and as adapter protein to couple membrane receptors to intracellular signaling pathways. Acts as a mediator of cell spreading and actin cytoskeleton rearrangement. Core component of the CTLH E3 ubiquitin-protein ligase complex that selectively accepts ubiquitin from UBE2H and mediates ubiquitination and subsequent proteasomal degradation of the transcription factor HBP1. May be involved in signaling of ITGB2/LFA-1 and other integrins. Enhances HGF-MET signaling by recruiting Sos and activating the Ras pathway. Enhances dihydrotestosterone-induced transactivation activity of AR, as well as dexamethasone-induced transactivation activity of NR3C1, but not affect estrogen-induced transactivation. Stabilizes TP73 isoform Alpha, probably by inhibiting its ubiquitination, and increases its proapoptotic activity. Inhibits the kinase activity of DYRK1A and DYRK1B. Inhibits FMR1 binding to RNA. The chain is Ran-binding protein 9 from Mus musculus (Mouse).